An 83-amino-acid polypeptide reads, in one-letter code: MMNIEELRKIFCEDGLYAVCVENGNLVSHYRIMCLRKNGAALINFVDARVTDGFILREGEFVTSLQALKEIGIKAGFSAFSGE.

This is an uncharacterized protein from Escherichia coli (strain K12).